A 320-amino-acid polypeptide reads, in one-letter code: ATP-dependent 6-phosphofructokinase (320 aa).

Glycine 12 is a binding site for ATP. Residues 22-26 (RGVVR) and 55-60 (RYSVSD) each bind ADP. ATP contacts are provided by residues 73–74 (RF) and 103–106 (GDGS). Aspartate 104 serves as a coordination point for Mg(2+). 126–128 (TID) provides a ligand contact to substrate. Aspartate 128 functions as the Proton acceptor in the catalytic mechanism. Arginine 155 contributes to the ADP binding site. Substrate contacts are provided by residues arginine 163 and 170–172 (MGR). ADP is bound by residues 186-188 (GCE), lysine 212, and 214-216 (KKH). Residues glutamate 223, arginine 244, and 250-253 (HIQR) each bind substrate.

The protein belongs to the phosphofructokinase type A (PFKA) family. ATP-dependent PFK group I subfamily. Prokaryotic clade 'B1' sub-subfamily. In terms of assembly, homotetramer. Mg(2+) serves as cofactor.

Its subcellular location is the cytoplasm. It carries out the reaction beta-D-fructose 6-phosphate + ATP = beta-D-fructose 1,6-bisphosphate + ADP + H(+). Its pathway is carbohydrate degradation; glycolysis; D-glyceraldehyde 3-phosphate and glycerone phosphate from D-glucose: step 3/4. Allosterically activated by ADP and other diphosphonucleosides, and allosterically inhibited by phosphoenolpyruvate. Catalyzes the phosphorylation of D-fructose 6-phosphate to fructose 1,6-bisphosphate by ATP, the first committing step of glycolysis. The chain is ATP-dependent 6-phosphofructokinase from Escherichia fergusonii (strain ATCC 35469 / DSM 13698 / CCUG 18766 / IAM 14443 / JCM 21226 / LMG 7866 / NBRC 102419 / NCTC 12128 / CDC 0568-73).